The sequence spans 1016 residues: Vacuolar membrane protease (1016 aa).

The disordered stretch occupies residues 1–36 (MAETESGTGNSPSHRLSETSNASGNRSHQQSKQIAS). Topologically, residues 1–57 (MAETESGTGNSPSHRLSETSNASGNRSHQQSKQIASYKSSKPNVFIRFIRAIFGYRK) are cytoplasmic. Residues 58 to 78 (TSVTLFVFITIIATLILVELS) form a helical membrane-spanning segment. The Vacuolar portion of the chain corresponds to 79–408 (NSLDFSVKLP…FVIPASQLVL (330 aa)). 2 N-linked (GlcNAc...) asparagine glycosylation sites follow: N147 and N177. Zn(2+)-binding residues include H191 and D203. E238 serves as the catalytic Proton acceptor. E239, E264, and H337 together coordinate Zn(2+). The chain crosses the membrane as a helical span at residues 409 to 429 (INVTCLAVIPLISLPLLVIIF). The Cytoplasmic portion of the chain corresponds to 430 to 438 (NYKKNWHIG). The chain crosses the membrane as a helical span at residues 439-459 (FINAIKFPVSLVLSICILNII). At 460 to 481 (THNVIASINEFLPNSSYDSIVS) the chain is on the vacuolar side. Residue N473 is glycosylated (N-linked (GlcNAc...) asparagine). The helical transmembrane segment at 482–502 (TLYSLFLLLNYLFLNGINFIF) threads the bilayer. Over 503 to 511 (KGYKGLYHD) the chain is Cytoplasmic. A helical membrane pass occupies residues 512-532 (EKLILIIQTSFIYWVLLIVST). Residues 533–547 (NKLSKNKIGNDHTGE) are Vacuolar-facing. The chain crosses the membrane as a helical span at residues 548–568 (FPLIMLFLLQSIGALFGLFSW). The Cytoplasmic segment spans residues 569-646 (SFKKTTPDEL…SFSYDWSIQY (78 aa)). Residues 598–622 (YGSNEAELESGEPISSNSSVSLNSS) form a disordered region. Residues 612–622 (SSNSSVSLNSS) are compositionally biased toward low complexity. A helical membrane pass occupies residues 647–667 (VVIVPLSSLIVYNTGSLLLSG). The Vacuolar segment spans residues 668–681 (LNKSIQESLNAEKL). N669 carries N-linked (GlcNAc...) asparagine glycosylation. Residues 682-702 (IFDLIQLVAVTLAIPFLPFIF) traverse the membrane as a helical segment. Over 703-706 (KINR) the chain is Cytoplasmic. The helical transmembrane segment at 707 to 727 (LLVTALVLVFCSGFISIFLKS) threads the bilayer. Residues 728–1016 (PFDQLNPLKL…LVSVSKYVEI (289 aa)) lie on the Vacuolar side of the membrane. 5 N-linked (GlcNAc...) asparagine glycosylation sites follow: N778, N821, N850, N875, and N977.

It belongs to the peptidase M28 family. Zn(2+) is required as a cofactor.

The protein resides in the vacuole membrane. In terms of biological role, may be involved in vacuolar sorting and osmoregulation. This Debaryomyces hansenii (strain ATCC 36239 / CBS 767 / BCRC 21394 / JCM 1990 / NBRC 0083 / IGC 2968) (Yeast) protein is Vacuolar membrane protease.